The primary structure comprises 587 residues: Aspartate--tRNA ligase (587 aa).

L-aspartate is bound at residue Glu-174. The tract at residues 198–201 is aspartate; that stretch reads QITK. Arg-220 contributes to the L-aspartate binding site. Residues 220 to 222 and Gln-229 contribute to the ATP site; that span reads RDE. His-443 contacts L-aspartate. Glu-477 serves as a coordination point for ATP. Residue Arg-484 coordinates L-aspartate. 529 to 532 serves as a coordination point for ATP; it reads GLDR.

Belongs to the class-II aminoacyl-tRNA synthetase family. Type 1 subfamily. In terms of assembly, homodimer.

Its subcellular location is the cytoplasm. The enzyme catalyses tRNA(Asp) + L-aspartate + ATP = L-aspartyl-tRNA(Asp) + AMP + diphosphate. In terms of biological role, catalyzes the attachment of L-aspartate to tRNA(Asp) in a two-step reaction: L-aspartate is first activated by ATP to form Asp-AMP and then transferred to the acceptor end of tRNA(Asp). In Streptococcus pneumoniae serotype 2 (strain D39 / NCTC 7466), this protein is Aspartate--tRNA ligase.